The chain runs to 203 residues: Protein GrpE (203 aa).

Residues 1–38 (MTQDQTAEQMPAAESADQSADQGPAAESAAPPAVDSER) are disordered.

The protein belongs to the GrpE family. Homodimer.

The protein resides in the cytoplasm. Participates actively in the response to hyperosmotic and heat shock by preventing the aggregation of stress-denatured proteins, in association with DnaK and GrpE. It is the nucleotide exchange factor for DnaK and may function as a thermosensor. Unfolded proteins bind initially to DnaJ; upon interaction with the DnaJ-bound protein, DnaK hydrolyzes its bound ATP, resulting in the formation of a stable complex. GrpE releases ADP from DnaK; ATP binding to DnaK triggers the release of the substrate protein, thus completing the reaction cycle. Several rounds of ATP-dependent interactions between DnaJ, DnaK and GrpE are required for fully efficient folding. This is Protein GrpE from Paramagnetospirillum magneticum (strain ATCC 700264 / AMB-1) (Magnetospirillum magneticum).